The following is a 1232-amino-acid chain: Chromosome-associated kinesin KIF4A (1232 aa).

A Kinesin motor domain is found at 9 to 336 (PVRVALRCRP…LRYADRARKI (328 aa)). An ATP-binding site is contributed by 88 to 95 (GQTGSGKT). The stretch at 350–999 (ELNHLKQQVQ…IKQKLTLLQV (650 aa)) forms a coiled coil. Ser-394 is subject to Phosphoserine. A disordered region spans residues 496–515 (AQVETSPETSRSSDAFTTQH). Positions 497-515 (QVETSPETSRSSDAFTTQH) are enriched in polar residues. The required for the interaction with PRC1 stretch occupies residues 663 to 1232 (QWKQKKDKEV…GCSPIEEEAH (570 aa)). The Nuclear localization signal motif lies at 793 to 798 (PKLRRR). The residue at position 799 (Thr-799) is a Phosphothreonine. 4 positions are modified to phosphoserine: Ser-801, Ser-810, Ser-815, and Ser-951. Residue Thr-995 is modified to Phosphothreonine. The interval 1000–1232 (ASRQKHLPKD…GCSPIEEEAH (233 aa)) is globular. Phosphoserine occurs at positions 1001, 1013, 1017, 1028, and 1126. Residues 1086–1144 (CSCKGWCGNKQCGCRKQKSDCGVDCCCDPTKCRNRQQGKDSLGTVERTQDSEGSFKLED) form a CRD; required for [4Fe-4S] cluster binding and localization to the spindle midzone and midbody during anaphase and telophase region. The tract at residues 1122-1142 (QGKDSLGTVERTQDSEGSFKL) is disordered. Positions 1132–1142 (RTQDSEGSFKL) are enriched in basic and acidic residues. Phosphothreonine is present on Thr-1181. The residue at position 1186 (Ser-1186) is a Phosphoserine. Lys-1194 participates in a covalent cross-link: Glycyl lysine isopeptide (Lys-Gly) (interchain with G-Cter in SUMO2). The residue at position 1225 (Ser-1225) is a Phosphoserine.

This sequence belongs to the TRAFAC class myosin-kinesin ATPase superfamily. Kinesin family. Chromokinesin subfamily. As to quaternary structure, interacts with the cytosolic iron-sulfur protein assembly (CIA) complex components CIAO2B and MMS19; the interactions facilitate the transfer of Fe-S clusters to KIF4A to ensure proper localization of KIF4A to mitotic machinery components. Interacts (via C-terminus) with unphosphorylated PRC1 (via N-terminus); the interaction is required for the progression of mitosis. [2Fe-2S] cluster serves as cofactor. The cofactor is [4Fe-4S] cluster. Highly expressed in hematopoietic tissues, fetal liver, spleen, thymus and adult thymus and bone marrow. Lower levels are found in heart, testis, kidney, colon and lung.

The protein resides in the nucleus matrix. Its subcellular location is the cytoplasm. The protein localises to the cytoskeleton. It localises to the spindle. It is found in the midbody. The protein resides in the chromosome. Its function is as follows. Iron-sulfur (Fe-S) cluster binding motor protein that has a role in chromosome segregation during mitosis. Translocates PRC1 to the plus ends of interdigitating spindle microtubules during the metaphase to anaphase transition, an essential step for the formation of an organized central spindle midzone and midbody and for successful cytokinesis. May play a role in mitotic chromosomal positioning and bipolar spindle stabilization. The polypeptide is Chromosome-associated kinesin KIF4A (KIF4A) (Homo sapiens (Human)).